We begin with the raw amino-acid sequence, 99 residues long: Nucleoid-associated protein EbfC (99 aa).

It belongs to the YbaB/EbfC family. As to quaternary structure, homodimer.

It is found in the cytoplasm. Its subcellular location is the nucleoid. Functionally, binds to DNA and alters its conformation. May be involved in regulation of gene expression, nucleoid organization and DNA protection. The sequence is that of Nucleoid-associated protein EbfC from Borrelia hermsii (strain HS1 / DAH).